Here is a 1088-residue protein sequence, read N- to C-terminus: DNA-directed RNA polymerase subunit beta (1088 aa).

This sequence belongs to the RNA polymerase beta chain family. As to quaternary structure, in plastids the minimal PEP RNA polymerase catalytic core is composed of four subunits: alpha, beta, beta', and beta''. When a (nuclear-encoded) sigma factor is associated with the core the holoenzyme is formed, which can initiate transcription.

Its subcellular location is the plastid. It is found in the chloroplast. The catalysed reaction is RNA(n) + a ribonucleoside 5'-triphosphate = RNA(n+1) + diphosphate. Its function is as follows. DNA-dependent RNA polymerase catalyzes the transcription of DNA into RNA using the four ribonucleoside triphosphates as substrates. This chain is DNA-directed RNA polymerase subunit beta, found in Chlorokybus atmophyticus (Soil alga).